The following is a 61-amino-acid chain: Conotoxin 3 (61 aa).

The signal sequence occupies residues 1 to 21; it reads MRCLPVFVILLLLIASVPSDA. Residues 22 to 48 constitute a propeptide that is removed on maturation; sequence VQLKTKDDMPLPSFNGNARRTPRMLSN. Trp-58 carries the post-translational modification 6'-bromotryptophan.

It belongs to the conotoxin T superfamily. In terms of processing, contains 2 disulfide bonds that can be either 'C1-C3, C2-C4' or 'C1-C4, C2-C3', since these disulfide connectivities have been observed for conotoxins with cysteine framework V (for examples, see AC P0DQQ7 and AC P81755). Contains 2 disulfide bonds. In terms of tissue distribution, expressed by the venom duct.

The protein localises to the secreted. The sequence is that of Conotoxin 3 from Conus textile (Cloth-of-gold cone).